Reading from the N-terminus, the 913-residue chain is Pentatricopeptide repeat-containing protein At1g10270 (913 aa).

The interval 34–138 (SLSPANEDPE…PNAPRLPDST (105 aa)) is disordered. Residues 64-73 (DPSQFQIPQN) are compositionally biased toward polar residues. Residues 74 to 84 (HTPPIPYPPIP) show a composition bias toward pro residues. The Nuclear localization signal motif lies at 99–108 (ERRRRKRRLR). Basic and acidic residues predominate over residues 108-130 (RIEPPLHALRRDPSAPPPKRDPN). The interval 134–167 (LPDSTSALVGQRLNLHNRVQSLIRASDLDAASKL) is leucine-zipper. PPR repeat units lie at residues 179 to 214 (TVFTCNAIIAAMYRAKRYSESISLFQYFFKQSNIVP), 215 to 250 (NVVSYNQIINAHCDEGNVDEALEVYRHILANAPFAP), 251 to 285 (SSVTYRHLTKGLVQAGRIGDAASLLREMLSKGQAA), 286 to 316 (DSTVYNNLIRGYLDLGDFDKAVEFFDELKSK), 321 to 355 (DGIVNATFMEYWFEKGNDKEAMESYRSLLDKKFRM), 356 to 390 (HPPTGNVLLEVFLKFGKKDEAWALFNEMLDNHAPP), 396 to 426 (NSDTVGIMVNECFKMGEFSEAINTFKKVGSK), 435 to 469 (DYLGYCNIVTRFCEQGMLTEAERFFAEGVSRSLPA), 470 to 504 (DAPSHRAMIDAYLKAERIDDAVKMLDRMVDVNLRV), 505 to 539 (VADFGARVFGELIKNGKLTESAEVLTKMGEREPKP), and 540 to 574 (DPSIYDVVVRGLCDGDALDQAKDIVGEMIRHNVGV). Residues 607–913 (RNAGQSGNTP…QEKKVVELRN (307 aa)) form a disordered region. Residues 639–649 (WTSQGVVHSNS) are compositionally biased toward polar residues. Composition is skewed to low complexity over residues 650-666 (GWANGTAGQTAGGAYKA) and 673-690 (SWSNTSDNQQQQSWSNQT). Residues 674-858 (WSNTSDNQQQ…TAQQQWSNQT (185 aa)) are 14 X 11 AA approximate tandem repeats of W-x(2)-Q-x(4)-Q-x(2). Residues 691 to 700 (AGQQPPSWSR) are compositionally biased toward polar residues. The segment covering 706–727 (QQQQSWSQQSGWSSPSGHQQSW) has biased composition (low complexity). A compositionally biased stretch (polar residues) spans 728 to 761 (TNQTAGQQQPWANQTPGQQQQWANQTPGQQQQLA). The segment covering 762-791 (NQTPGQQQQWANQTPGQQQQWANQNNGHQQ) has biased composition (low complexity). Residues 792 to 814 (PWANQNTGHQQSWANQTPSQQQP) are compositionally biased toward polar residues. Positions 815–845 (WANQTTGQQQGWGNQTTGQQQQWANQTAGQQ) are enriched in low complexity. 2 stretches are compositionally biased toward polar residues: residues 846–867 (SGWTAQQQWSNQTASHQQSQWL) and 875–894 (ANQTPWSNSVDSHLPQQQEP). Residues 899-913 (ECQETQEKKVVELRN) show a composition bias toward basic and acidic residues.

It belongs to the PPR family. P subfamily. As to quaternary structure, interacts with RPB36B through its WQQ domain. As to expression, ubiquitous but preferentially expressed in gametophytes and young embryos.

It localises to the nucleus. Its function is as follows. May function as a transcriptional regulator essential for early embryogenesis. The protein is Pentatricopeptide repeat-containing protein At1g10270 (GRP23) of Arabidopsis thaliana (Mouse-ear cress).